Reading from the N-terminus, the 263-residue chain is Neurogenin-2 (263 aa).

The interval 20-76 is disordered; that stretch reads LGSASPASATLTPMSSSADEEEDEELRRPGSARGQRGAEAEQGVQGSPASGAGGCRP. The segment covering 24-36 has biased composition (polar residues); the sequence is SPASATLTPMSSS. The region spanning 112-164 is the bHLH domain; the sequence is TRRLKANNRERNRMHNLNAALDALREVLPTFPEDAKLTKIETLRFAHNYIWAL. Low complexity predominate over residues 197 to 231; that stretch reads LGASGDSPSPPSSWSCTNSPASSSNSTSPYSCTLS. Residues 197 to 253 are disordered; it reads LGASGDSPSPPSSWSCTNSPASSSNSTSPYSCTLSPASPGSDVDYWQPPPPEKHRYA.

In terms of assembly, efficient DNA binding requires dimerization with another bHLH protein.

The protein resides in the nucleus. Functionally, transcriptional regulator. Involved in neuronal differentiation. Activates transcription by binding to the E box (5'-CANNTG-3'). The sequence is that of Neurogenin-2 (Neurog2) from Mus musculus (Mouse).